The following is a 435-amino-acid chain: Arginine biosynthesis bifunctional protein ArgJ, mitochondrial (435 aa).

6 residues coordinate substrate: threonine 167, lysine 193, threonine 204, glutamate 291, asparagine 430, and threonine 435. The Nucleophile role is filled by threonine 204.

The protein belongs to the ArgJ family. In terms of assembly, heterodimer of an alpha and a beta chain. In terms of processing, the alpha and beta chains are autoproteolytically processed from a single precursor protein within the mitochondrion.

It is found in the mitochondrion matrix. It catalyses the reaction N(2)-acetyl-L-ornithine + L-glutamate = N-acetyl-L-glutamate + L-ornithine. The catalysed reaction is L-glutamate + acetyl-CoA = N-acetyl-L-glutamate + CoA + H(+). It participates in amino-acid biosynthesis; L-arginine biosynthesis; L-ornithine and N-acetyl-L-glutamate from L-glutamate and N(2)-acetyl-L-ornithine (cyclic): step 1/1. Its pathway is amino-acid biosynthesis; L-arginine biosynthesis; N(2)-acetyl-L-ornithine from L-glutamate: step 1/4. Catalyzes two activities which are involved in the cyclic version of arginine biosynthesis: the synthesis of acetylglutamate from glutamate and acetyl-CoA, and of ornithine by transacetylation between acetylornithine and glutamate. In Heterostelium pallidum (strain ATCC 26659 / Pp 5 / PN500) (Cellular slime mold), this protein is Arginine biosynthesis bifunctional protein ArgJ, mitochondrial.